Reading from the N-terminus, the 315-residue chain is Melanocyte-stimulating hormone receptor (315 aa).

At 1-35 the chain is on the extracellular side; sequence MSTQEPQKSLLGSLNSNATSHLGLATNQSEPWCLY. Residues Asn-17 and Asn-27 are each glycosylated (N-linked (GlcNAc...) asparagine). The helical transmembrane segment at 36 to 61 threads the bilayer; sequence VSIPDGLFLSLGLVSLVENVLVVIAI. The Cytoplasmic segment spans residues 62-70; the sequence is TKNRNLHSP. A helical transmembrane segment spans residues 71–91; the sequence is MYYFICCLALSDLMVSVSIVL. Topologically, residues 92–116 are extracellular; sequence ETTIILLLEAGILVARVALVQQLDN. A helical transmembrane segment spans residues 117–138; the sequence is LIDVLICGSMVSSLCFLGIIAI. Residues 139 to 161 lie on the Cytoplasmic side of the membrane; the sequence is DRYISIFYALRYHSIVTLPRARR. A helical transmembrane segment spans residues 162–181; the sequence is AVVGIWMVSIVSSTLFITYY. Residues 182–189 lie on the Extracellular side of the membrane; it reads KHTAVLLC. The chain crosses the membrane as a helical span at residues 190–209; that stretch reads LVTFFLAMLALMAILYAHMF. Residues 210–238 lie on the Cytoplasmic side of the membrane; that stretch reads TRACQHAQGIAQLHKRRRSIRQGFCLKGA. A helical membrane pass occupies residues 239-264; sequence ATLTILLGIFFLCWGPFFLHLLLIVL. Over 265–277 the chain is Extracellular; that stretch reads CPQHPTCSCIFKN. Residues 278 to 298 traverse the membrane as a helical segment; the sequence is FNLFLLLIVLSSTVDPLIYAF. Residues 299–315 are Cytoplasmic-facing; the sequence is RSQELRMTLKEVLLCSW. Cys-313 carries the S-palmitoyl cysteine lipid modification.

This sequence belongs to the G-protein coupled receptor 1 family. Interacts with MGRN1, but does not undergo MGRN1-mediated ubiquitination; this interaction competes with GNAS-binding and thus inhibits agonist-induced cAMP production. Interacts with OPN3; the interaction results in a decrease in MC1R-mediated cAMP signaling and ultimately a decrease in melanin production in melanocytes.

It is found in the cell membrane. Receptor for MSH (alpha, beta and gamma) and ACTH. The activity of this receptor is mediated by G proteins which activate adenylate cyclase. Mediates melanogenesis, the production of eumelanin (black/brown) and phaeomelanin (red/yellow), via regulation of cAMP signaling in melanocytes. In Mus musculus (Mouse), this protein is Melanocyte-stimulating hormone receptor (Mc1r).